The following is a 492-amino-acid chain: Signal transduction histidine-protein kinase/phosphatase MprB (492 aa).

At 1-27 the chain is on the cytoplasmic side; that stretch reads MAFPPNSWRPTGPLPTSSLSLRWRVMM. A helical transmembrane segment spans residues 28 to 48; it reads LAMSMVALVVVLMAVAVYAVV. Over 49–165 the chain is Extracellular; the sequence is SRALYDDLDN…TVQVLRRLGT (117 aa). The helical transmembrane segment at 166-186 threads the bilayer; it reads VLLIVGGIGVAVAAIAGGAVA. Residues 187–239 form the HAMP domain; it reads RAGLRPVGRLTEAAERVARTDDLRPIPVVGSDELARLTEAFNMMLRALAESRE. Over 187–492 the chain is Cytoplasmic; sequence RAGLRPVGRL…DRGGHTVATE (306 aa). A Histidine kinase domain is found at 247 to 467; it reads DAGHELRTPL…SVHMLLPGQR (221 aa). The residue at position 250 (H250) is a Phosphohistidine; by autocatalysis. A disordered region spans residues 470–492; that stretch reads DPGATRSAEGFVDDRGGHTVATE.

The cofactor is Mg(2+). Mn(2+) serves as cofactor. Autophosphorylated.

It is found in the cell membrane. It catalyses the reaction ATP + protein L-histidine = ADP + protein N-phospho-L-histidine.. Member of the two-component regulatory system MprB/MprA which contributes to maintaining a balance among several systems involved in stress resistance and is required for establishment and maintenance of persistent infection in the host. In response to environmental signals MprB acts both as a membrane-associated protein kinase that undergoes autophosphorylation and subsequently transfers the phosphate to MprA, and a protein phosphatase that dephosphorylates phospho-MprA. In Mycolicibacterium smegmatis (strain ATCC 700084 / mc(2)155) (Mycobacterium smegmatis), this protein is Signal transduction histidine-protein kinase/phosphatase MprB (mprB).